The chain runs to 90 residues: RNA-binding protein Hfq (90 aa).

Residues 11-71 (DVFLNSVRKT…ISTIMPAAPV (61 aa)) form the Sm domain.

Belongs to the Hfq family. As to quaternary structure, homohexamer.

In terms of biological role, RNA chaperone that binds small regulatory RNA (sRNAs) and mRNAs to facilitate mRNA translational regulation in response to envelope stress, environmental stress and changes in metabolite concentrations. Also binds with high specificity to tRNAs. The protein is RNA-binding protein Hfq of Maricaulis maris (strain MCS10) (Caulobacter maris).